We begin with the raw amino-acid sequence, 460 residues long: Lipase member H-A (460 aa).

An N-terminal signal peptide occupies residues 1–26 (MLLSFYFNGLLLVGCLLSWGRSDTEG). Residues Asn67 and Asn75 are each glycosylated (N-linked (GlcNAc...) asparagine). The active-site Nucleophile is the Ser163. A glycan (N-linked (GlcNAc...) asparagine) is linked at Asn177. The active-site Charge relay system is Asp187. The cysteines at positions 242 and 255 are disulfide-linked. His257 acts as the Charge relay system in catalysis. Cystine bridges form between Cys279/Cys290 and Cys293/Cys301. N-linked (GlcNAc...) asparagine glycosylation is present at Asn289. A glycan (N-linked (GlcNAc...) asparagine) is linked at Asn366. Cys436 and Cys455 are joined by a disulfide.

The protein belongs to the AB hydrolase superfamily. Lipase family.

The protein resides in the secreted. It is found in the cell membrane. It carries out the reaction 1-hexadecanoyl-2-(9Z-octadecenoyl)-sn-glycero-3-phosphate + H2O = 2-(9Z-octadecenoyl)-sn-glycero-3-phosphate + hexadecanoate + H(+). In terms of biological role, hydrolyzes specifically phosphatidic acid (PA) to produce 2-acyl lysophosphatidic acid (LPA; a potent bioactive lipid mediator) and fatty acid. Does not hydrolyze other phospholipids, like phosphatidylserine (PS), phosphatidylcholine (PC) and phosphatidylethanolamine (PE) or triacylglycerol (TG). The protein is Lipase member H-A (liph-a) of Xenopus laevis (African clawed frog).